Here is a 261-residue protein sequence, read N- to C-terminus: Cytochrome c oxidase subunit 3 (261 aa).

At 1 to 15 (MAHQAHAYHMVDPSP) the chain is on the mitochondrial matrix side. The chain crosses the membrane as a helical span at residues 16 to 34 (WPLTGAIAALLMTSGLAIW). Over 35–40 (FHFHST) the chain is Mitochondrial intermembrane. A helical membrane pass occupies residues 41 to 66 (TLMTLGLILLLLTMYQWWRDIIREGT). Topologically, residues 67-72 (FQGHHT) are mitochondrial matrix. Residues 73–105 (PPVQKGLRYGMILFITSEVFFFLGFFWAFYHSS) traverse the membrane as a helical segment. Topologically, residues 106 to 128 (LAPTPELGGCWPPTGITPLDPFE) are mitochondrial intermembrane. The helical transmembrane segment at 129–152 (VPLLNTAVLLASGVTVTWAHHSIM) threads the bilayer. At 153-155 (EGE) the chain is on the mitochondrial matrix side. A helical membrane pass occupies residues 156 to 183 (RKQAIQSLALTILLGFYFTALQAMEYYE). Residues 184-190 (APFTIAD) are Mitochondrial intermembrane-facing. A helical membrane pass occupies residues 191-223 (GVYGSTFFVATGFHGLHVIIGSTFLAVCLLRQI). Topologically, residues 224–232 (QYHFTSEHH) are mitochondrial matrix. The chain crosses the membrane as a helical span at residues 233 to 256 (FGFEAAAWYWHFVDVVWLFLYVSI). The Mitochondrial intermembrane segment spans residues 257–261 (YWWGS).

It belongs to the cytochrome c oxidase subunit 3 family. Component of the cytochrome c oxidase (complex IV, CIV), a multisubunit enzyme composed of 14 subunits. The complex is composed of a catalytic core of 3 subunits MT-CO1, MT-CO2 and MT-CO3, encoded in the mitochondrial DNA, and 11 supernumerary subunits COX4I, COX5A, COX5B, COX6A, COX6B, COX6C, COX7A, COX7B, COX7C, COX8 and NDUFA4, which are encoded in the nuclear genome. The complex exists as a monomer or a dimer and forms supercomplexes (SCs) in the inner mitochondrial membrane with NADH-ubiquinone oxidoreductase (complex I, CI) and ubiquinol-cytochrome c oxidoreductase (cytochrome b-c1 complex, complex III, CIII), resulting in different assemblies (supercomplex SCI(1)III(2)IV(1) and megacomplex MCI(2)III(2)IV(2)).

Its subcellular location is the mitochondrion inner membrane. The enzyme catalyses 4 Fe(II)-[cytochrome c] + O2 + 8 H(+)(in) = 4 Fe(III)-[cytochrome c] + 2 H2O + 4 H(+)(out). In terms of biological role, component of the cytochrome c oxidase, the last enzyme in the mitochondrial electron transport chain which drives oxidative phosphorylation. The respiratory chain contains 3 multisubunit complexes succinate dehydrogenase (complex II, CII), ubiquinol-cytochrome c oxidoreductase (cytochrome b-c1 complex, complex III, CIII) and cytochrome c oxidase (complex IV, CIV), that cooperate to transfer electrons derived from NADH and succinate to molecular oxygen, creating an electrochemical gradient over the inner membrane that drives transmembrane transport and the ATP synthase. Cytochrome c oxidase is the component of the respiratory chain that catalyzes the reduction of oxygen to water. Electrons originating from reduced cytochrome c in the intermembrane space (IMS) are transferred via the dinuclear copper A center (CU(A)) of subunit 2 and heme A of subunit 1 to the active site in subunit 1, a binuclear center (BNC) formed by heme A3 and copper B (CU(B)). The BNC reduces molecular oxygen to 2 water molecules using 4 electrons from cytochrome c in the IMS and 4 protons from the mitochondrial matrix. This Carassius auratus (Goldfish) protein is Cytochrome c oxidase subunit 3 (mt-co3).